A 390-amino-acid polypeptide reads, in one-letter code: Glutamate 5-kinase (390 aa).

Lys-29 contacts ATP. The substrate site is built by Ser-69, Asp-156, and Asn-168. 188–189 (TD) provides a ligand contact to ATP. Positions 295–374 (SGSLIVDAGA…EQFDRILGNN (80 aa)) constitute a PUA domain.

This sequence belongs to the glutamate 5-kinase family.

The protein localises to the cytoplasm. The enzyme catalyses L-glutamate + ATP = L-glutamyl 5-phosphate + ADP. The protein operates within amino-acid biosynthesis; L-proline biosynthesis; L-glutamate 5-semialdehyde from L-glutamate: step 1/2. In terms of biological role, catalyzes the transfer of a phosphate group to glutamate to form L-glutamate 5-phosphate. The sequence is that of Glutamate 5-kinase from Psychrobacter arcticus (strain DSM 17307 / VKM B-2377 / 273-4).